The sequence spans 89 residues: Small ribosomal subunit protein uS14 (89 aa).

The protein belongs to the universal ribosomal protein uS14 family. In terms of assembly, part of the 30S ribosomal subunit. Contacts proteins S3 and S10.

Its function is as follows. Binds 16S rRNA, required for the assembly of 30S particles and may also be responsible for determining the conformation of the 16S rRNA at the A site. The protein is Small ribosomal subunit protein uS14 of Shouchella clausii (strain KSM-K16) (Alkalihalobacillus clausii).